The chain runs to 118 residues: Basic phospholipase A2 1 (118 aa).

Cystine bridges form between C11–C72, C26–C117, C28–C44, C43–C98, C50–C91, C60–C84, and C78–C89. Ca(2+)-binding residues include Y27, G29, and G31. H47 is a catalytic residue. A Ca(2+)-binding site is contributed by D48. D92 is an active-site residue.

This sequence belongs to the phospholipase A2 family. Group I subfamily. D49 sub-subfamily. Requires Ca(2+) as cofactor. As to expression, expressed by the venom gland.

It localises to the secreted. The enzyme catalyses a 1,2-diacyl-sn-glycero-3-phosphocholine + H2O = a 1-acyl-sn-glycero-3-phosphocholine + a fatty acid + H(+). PLA2 catalyzes the calcium-dependent hydrolysis of the 2-acyl groups in 3-sn-phosphoglycerides. The polypeptide is Basic phospholipase A2 1 (Naja melanoleuca (Forest cobra)).